We begin with the raw amino-acid sequence, 160 residues long: MSEAKKYVMTYEGVKKLEEELEFLKTVKRKEITEKIKVALSFGDLSENSEYDEAKNEQAFVEGRIIQLENMLKNASIVDENEVPKDVVSVGSIVKVKDYEFDEEVEYIIVGSAEADPMNNKISNESPVGHGLIGKKAGDIIEVAVPDGVSKYEILEVNRA.

Positions 12 to 76 form a coiled coil; that stretch reads EGVKKLEEEL…QLENMLKNAS (65 aa).

The protein belongs to the GreA/GreB family.

Necessary for efficient RNA polymerase transcription elongation past template-encoded arresting sites. The arresting sites in DNA have the property of trapping a certain fraction of elongating RNA polymerases that pass through, resulting in locked ternary complexes. Cleavage of the nascent transcript by cleavage factors such as GreA or GreB allows the resumption of elongation from the new 3'terminus. GreA releases sequences of 2 to 3 nucleotides. This is Transcription elongation factor GreA from Clostridium botulinum (strain Hall / ATCC 3502 / NCTC 13319 / Type A).